The chain runs to 433 residues: tRNA modification GTPase MnmE (433 aa).

(6S)-5-formyl-5,6,7,8-tetrahydrofolate-binding residues include R24, E81, and R120. A TrmE-type G domain is found at 216 to 359 (GVEIVVLGAP…LLAALRARVE (144 aa)). Residue N226 coordinates K(+). GTP-binding positions include 226 to 231 (NAGKST), 245 to 251 (SDIPGTT), 270 to 273 (DTAG), and 340 to 342 (SAR). S230 is a binding site for Mg(2+). K(+) contacts are provided by S245, I247, and T250. Position 251 (T251) interacts with Mg(2+). K433 contacts (6S)-5-formyl-5,6,7,8-tetrahydrofolate.

It belongs to the TRAFAC class TrmE-Era-EngA-EngB-Septin-like GTPase superfamily. TrmE GTPase family. In terms of assembly, homodimer. Heterotetramer of two MnmE and two MnmG subunits. K(+) serves as cofactor.

It localises to the cytoplasm. Its function is as follows. Exhibits a very high intrinsic GTPase hydrolysis rate. Involved in the addition of a carboxymethylaminomethyl (cmnm) group at the wobble position (U34) of certain tRNAs, forming tRNA-cmnm(5)s(2)U34. In Acidiphilium cryptum (strain JF-5), this protein is tRNA modification GTPase MnmE.